The chain runs to 167 residues: Elafin (167 aa).

An N-terminal signal peptide occupies residues 1-21 (MRSRSFLVLVVVFLICGTLVA). A propeptide spanning residues 22 to 70 (QAAGRIRRPKGKGTKKILALVKGQGPVRGKDQVKGQGPVKGQDLGKSQD) is cleaved from the precursor. 12 consecutive repeat copies span residues 44 to 49 (GQGPVR), 50 to 55 (GKDQVK), 56 to 61 (GQGPVK), 62 to 67 (GQDLGK), 68 to 73 (SQDPVK), 74 to 79 (AQLPDK), 80 to 85 (GQDLGK), 86 to 91 (GEDSVK), 92 to 97 (GQDPFK), 98 to 103 (AQLPDK), 104 to 109 (LQDPVK), and 110 to 115 (AQPAIK). Residues 44 to 115 (GQGPVRGKDQ…DPVKAQPAIK (72 aa)) form a 12 X 6 AA tandem repeats of [GSAL]-[QEK]-[DGLP]-[APSLQ]-[VGDFI]-[KR] region. A disordered region spans residues 46–104 (GPVRGKDQVKGQGPVKGQDLGKSQDPVKAQLPDKGQDLGKGEDSVKGQDPFKAQLPDKL). Positions 78 to 126 (DKGQDLGKGEDSVKGQDPFKAQLPDKLQDPVKAQPAIKRLILLTKPGSC) are 2 X tandem repeats of SVP-1 like motif. Basic and acidic residues predominate over residues 79–91 (KGQDLGKGEDSVK). SVP-1 clotting repeat units lie at residues 80-101 (GQDLGKGEDSVKGQDPFKAQLP) and 104-126 (LQDPVKAQPAIKRLILLTKPGSC). In terms of domain architecture, WAP spans 119–167 (LLTKPGSCPRILIRCLMVNPPNRCLSDAQCPGLKKCCEGFCGKACMDPK). Intrachain disulfides connect C126-C155, C133-C159, C142-C154, and C148-C163.

As to expression, trachea and large intestine.

In terms of biological role, neutrophil and pancreatic elastase-specific inhibitor of skin. It may prevent elastase-mediated tissue proteolysis. This Sus scrofa (Pig) protein is Elafin.